The chain runs to 504 residues: Maturase K (504 aa).

Belongs to the intron maturase 2 family. MatK subfamily.

It localises to the plastid. It is found in the chloroplast. In terms of biological role, usually encoded in the trnK tRNA gene intron. Probably assists in splicing its own and other chloroplast group II introns. This Actinidia chinensis (Kiwi) protein is Maturase K.